Here is a 1099-residue protein sequence, read N- to C-terminus: Protein DDB_G0287365 (1099 aa).

The first 24 residues, M1–G24, serve as a signal peptide directing secretion. In terms of domain architecture, G8 spans K47–S174. N-linked (GlcNAc...) asparagine glycans are attached at residues N62, N137, N664, N764, and N858.

This sequence belongs to the CEMIP family.

In Dictyostelium discoideum (Social amoeba), this protein is Protein DDB_G0287365.